We begin with the raw amino-acid sequence, 118 residues long: Small ribosomal subunit protein uS13 (118 aa).

The disordered stretch occupies residues 94–118 (GLPLRGQRTKTNARTRKGPRKPIKK).

Belongs to the universal ribosomal protein uS13 family. As to quaternary structure, part of the 30S ribosomal subunit. Forms a loose heterodimer with protein S19. Forms two bridges to the 50S subunit in the 70S ribosome.

In terms of biological role, located at the top of the head of the 30S subunit, it contacts several helices of the 16S rRNA. In the 70S ribosome it contacts the 23S rRNA (bridge B1a) and protein L5 of the 50S subunit (bridge B1b), connecting the 2 subunits; these bridges are implicated in subunit movement. Contacts the tRNAs in the A and P-sites. This chain is Small ribosomal subunit protein uS13, found in Cellvibrio japonicus (strain Ueda107) (Pseudomonas fluorescens subsp. cellulosa).